The chain runs to 53 residues: MKLLTILILFYSFFMNLQALPDYHQANRCVLLGTRIGWNDDNSQDPNVYWKWC.

Positions 1–19 are cleaved as a signal peptide; sequence MKLLTILILFYSFFMNLQA.

This is an uncharacterized protein from Autographa californica nuclear polyhedrosis virus (AcMNPV).